The primary structure comprises 260 residues: Scytalidopepsin B (260 aa).

Positions Met1–Ala20 are cleaved as a signal peptide. Positions Ala21–Ala54 are excised as a propeptide. The cysteines at positions 101 and 181 are disulfide-linked. Catalysis depends on Glu190, which acts as the Proton acceptor. Intrachain disulfides connect Cys195–Cys219 and Cys248–Cys257.

It belongs to the peptidase G1 family. As to quaternary structure, monomer.

The catalysed reaction is Hydrolysis of proteins with broad specificity, cleaving 24-Phe-|-Phe-25, but not 15-Leu-|-Tyr-16 and 25-Phe-|-Tyr-26 in the B chain of insulin.. The sequence is that of Scytalidopepsin B from Scytalidium lignicola (Hyphomycete).